A 987-amino-acid polypeptide reads, in one-letter code: Sarcosine oxidase subunit alpha (987 aa).

Aspartate 198, glutamate 199, serine 206, alanine 244, and glycine 445 together coordinate NAD(+). Threonine 714 and glutamate 806 together coordinate (6R)-5,10-methylene-5,6,7,8-tetrahydrofolate.

This sequence belongs to the GcvT family. As to quaternary structure, heterotetramer composed of subunits alpha (SoxA), beta (SoxB), gamma (SoxG) and delta (SoxD). NAD(+) is required as a cofactor.

It is found in the cytoplasm. It carries out the reaction sarcosine + (6S)-5,6,7,8-tetrahydrofolate + O2 = (6R)-5,10-methylene-5,6,7,8-tetrahydrofolate + glycine + H2O2. The catalysed reaction is sarcosine + O2 + H2O = formaldehyde + glycine + H2O2. In the presence of tetrahydrofolate, catalyzes the oxidative demethylation of sarcosine to yield glycine, 5,10-methylenetetrahydrofolate and hydrogen peroxide. In the absence of tetrahydrofolate, catalyzes the oxidative demethylation of sarcosine to yield glycine, formaldehyde and hydrogen peroxide. This is Sarcosine oxidase subunit alpha (soxA) from Rhizobium meliloti (strain 1021) (Ensifer meliloti).